Consider the following 248-residue polypeptide: ATP synthase subunit a, chloroplastic (248 aa).

5 helical membrane-spanning segments follow: residues 39–59, 96–116, 135–155, 200–220, and 221–241; these read QVLI…ILAV, VPFI…GALF, INTT…AGLT, LVVV…VMFL, and GLFT…AYIG.

This sequence belongs to the ATPase A chain family. As to quaternary structure, F-type ATPases have 2 components, CF(1) - the catalytic core - and CF(0) - the membrane proton channel. CF(1) has five subunits: alpha(3), beta(3), gamma(1), delta(1), epsilon(1). CF(0) has four main subunits: a, b, b' and c.

It is found in the plastid. Its subcellular location is the chloroplast thylakoid membrane. Functionally, key component of the proton channel; it plays a direct role in the translocation of protons across the membrane. The sequence is that of ATP synthase subunit a, chloroplastic from Pelargonium hortorum (Common geranium).